The following is a 120-amino-acid chain: Large ribosomal subunit protein uL18 (120 aa).

The protein belongs to the universal ribosomal protein uL18 family. Part of the 50S ribosomal subunit; part of the 5S rRNA/L5/L18/L25 subcomplex. Contacts the 5S and 23S rRNAs.

This is one of the proteins that bind and probably mediate the attachment of the 5S RNA into the large ribosomal subunit, where it forms part of the central protuberance. The polypeptide is Large ribosomal subunit protein uL18 (Exiguobacterium sp. (strain ATCC BAA-1283 / AT1b)).